The chain runs to 68 residues: Disintegrin EMS11A (68 aa).

The Disintegrin domain maps to 1 to 65; sequence NSAHPCCDPV…DCPRNRYKGK (65 aa). 4 disulfides stabilise this stretch: Cys-6/Cys-29, Cys-20/Cys-26, Cys-25/Cys-50, and Cys-38/Cys-57. The Cell attachment site; atypical (MLD) signature appears at 42 to 44; the sequence is MLD.

The protein belongs to the disintegrin family. Dimeric disintegrin subfamily. Heterodimer; disulfide-linked. In terms of tissue distribution, expressed by the venom gland.

The protein resides in the secreted. In terms of biological role, poor inhibitor of platelet aggregation. The disintegrin inhibits the adhesion of both the alpha-4/beta-1 (ITGA4/ITGB1) and the alpha-5/beta-1 (ITGA5/ITGB1) integrins to VCAM-1 and fibronectin respectively with almost the same degree of specificity. Inhibition on alpha-IIb/beta-3 (ITGA2B/ITGB3) is low. The polypeptide is Disintegrin EMS11A (Echis multisquamatus (Central Asian sand viper)).